A 201-amino-acid polypeptide reads, in one-letter code: dTTP/UTP pyrophosphatase (201 aa).

The Proton acceptor role is filled by Asp75.

It belongs to the Maf family. YhdE subfamily. The cofactor is a divalent metal cation.

The protein localises to the cytoplasm. The enzyme catalyses dTTP + H2O = dTMP + diphosphate + H(+). It catalyses the reaction UTP + H2O = UMP + diphosphate + H(+). Nucleoside triphosphate pyrophosphatase that hydrolyzes dTTP and UTP. May have a dual role in cell division arrest and in preventing the incorporation of modified nucleotides into cellular nucleic acids. This chain is dTTP/UTP pyrophosphatase, found in Pseudomonas fluorescens (strain ATCC BAA-477 / NRRL B-23932 / Pf-5).